Consider the following 118-residue polypeptide: V-type proton ATPase subunit G 2 (118 aa).

A coiled-coil region spans residues 8 to 57 (IQQLLQAEKRAAEKVADARKRKARRLKQAKEEAQMEVDQYRREREQEFQS). The segment at 25–90 (ARKRKARRLK…VQGMQSSQQR (66 aa)) is disordered. Residues 35 to 55 (QAKEEAQMEVDQYRREREQEF) show a composition bias toward basic and acidic residues. Composition is skewed to polar residues over residues 56–69 (QSKQQAAMGSQGNL) and 78–89 (RRQVQGMQSSQQ).

It belongs to the V-ATPase G subunit family. V-ATPase is a heteromultimeric enzyme made up of two complexes: the ATP-hydrolytic V1 complex and the proton translocation V0 complex. The V1 complex consists of three catalytic AB heterodimers that form a heterohexamer, three peripheral stalks each consisting of EG heterodimers, one central rotor including subunits D and F, and the regulatory subunits C and H. The proton translocation complex V0 consists of the proton transport subunit a, a ring of proteolipid subunits c9c'', rotary subunit d, subunits e and f, and the accessory subunits ATP6AP1/Ac45 and ATP6AP2/PRR. In terms of tissue distribution, expressed in brain (at protein level).

It is found in the melanosome. The protein localises to the cytoplasmic vesicle. It localises to the clathrin-coated vesicle membrane. Functionally, subunit of the V1 complex of vacuolar(H+)-ATPase (V-ATPase), a multisubunit enzyme composed of a peripheral complex (V1) that hydrolyzes ATP and a membrane integral complex (V0) that translocates protons. V-ATPase is responsible for acidifying and maintaining the pH of intracellular compartments and in some cell types, is targeted to the plasma membrane, where it is responsible for acidifying the extracellular environment. This is V-type proton ATPase subunit G 2 from Bos taurus (Bovine).